We begin with the raw amino-acid sequence, 214 residues long: Adenylate kinase (214 aa).

An ATP-binding site is contributed by 10 to 15 (GAGKGT). The segment at 30–59 (STGDLLREEIANNTELGKQAKKLIDGGNLV) is NMP. Residues Thr31, Arg36, 57 to 59 (NLV), 83 to 86 (GFPR), and Gln90 each bind AMP. Residues 124–161 (LRRQCKNCGNIFNLRFIKNFDGKCPKCGSTDIYQRADD) are LID. Residue Arg125 participates in ATP binding. Residues Cys128 and Cys131 each contribute to the Zn(2+) site. 134 to 135 (IF) lines the ATP pocket. Positions 147 and 150 each coordinate Zn(2+). Residues Arg158 and Arg169 each coordinate AMP. Position 197 (Lys197) interacts with ATP.

The protein belongs to the adenylate kinase family. Monomer.

The protein localises to the cytoplasm. The catalysed reaction is AMP + ATP = 2 ADP. Its pathway is purine metabolism; AMP biosynthesis via salvage pathway; AMP from ADP: step 1/1. Catalyzes the reversible transfer of the terminal phosphate group between ATP and AMP. Plays an important role in cellular energy homeostasis and in adenine nucleotide metabolism. The chain is Adenylate kinase from Elusimicrobium minutum (strain Pei191).